The primary structure comprises 60 residues: DNA-binding protein 7c (60 aa).

Residues 37-60 (DNGKTGRGAVSEKDAPKELLEKLK) form a disordered region. Basic and acidic residues predominate over residues 46 to 60 (VSEKDAPKELLEKLK).

This sequence belongs to the 7 kDa DNA-binding/endoribonuclease P2 family. As to quaternary structure, monomer.

Its subcellular location is the cytoplasm. Functionally, can constrain negative DNA supercoils. May be involved in maintaining the integrity of the genome at high temperature. In Acidianus hospitalis (strain W1), this protein is DNA-binding protein 7c.